The primary structure comprises 67 residues: Phycobilisome 7.8 kDa linker polypeptide, allophycocyanin-associated, core (67 aa).

The CpcD-like domain maps to 1 to 56 (MRMFRITACVPSQTRIRTQRELQNTYFTKLVPYDNWFREQQRIMKMGGKIVKVELA).

Belongs to the phycobilisome linker protein family.

Its subcellular location is the cellular thylakoid membrane. Its function is as follows. Rod linker protein, associated with allophycocyanin. Linker polypeptides determine the state of aggregation and the location of the disk-shaped phycobiliprotein units within the phycobilisome and modulate their spectroscopic properties in order to mediate a directed and optimal energy transfer. The polypeptide is Phycobilisome 7.8 kDa linker polypeptide, allophycocyanin-associated, core (apcC) (Synechocystis sp. (strain PCC 6714) (Aphanocapsa sp. (strain PCC 6714))).